An 84-amino-acid polypeptide reads, in one-letter code: Toxin Cll9 (84 aa).

Positions 1-19 (MNSLLMITACLILIGTVWA) are cleaved as a signal peptide. The LCN-type CS-alpha/beta domain occupies 20–83 (EDGYLFDKRK…ISRTPGKTCK (64 aa)). 4 cysteine pairs are disulfide-bonded: C31/C82, C35/C58, C44/C63, and C48/C65.

Expressed by the venom gland.

It localises to the secreted. In terms of biological role, beta toxins bind voltage-independently at site-4 of sodium channels (Nav) and shift the voltage of activation toward more negative potentials thereby affecting sodium channel activation and promoting spontaneous and repetitive firing. Has some action on peripheral ganglia, but not on other sodium channels such as those from cerebellum granular cells in culture. Induces sleep, suggesting a strong antiepileptic action. This is Toxin Cll9 from Centruroides limpidus (Mexican scorpion).